A 293-amino-acid polypeptide reads, in one-letter code: Pantothenate synthetase (293 aa).

Residue 30–37 coordinates ATP; the sequence is MGNLHEGH. The Proton donor role is filled by H37. (R)-pantoate is bound at residue Q61. A beta-alanine-binding site is contributed by Q61. Residue 149-152 participates in ATP binding; the sequence is GEKD. Q155 is a (R)-pantoate binding site. ATP is bound by residues V178 and 186–189; that span reads MSSR.

Belongs to the pantothenate synthetase family. As to quaternary structure, homodimer.

The protein localises to the cytoplasm. It carries out the reaction (R)-pantoate + beta-alanine + ATP = (R)-pantothenate + AMP + diphosphate + H(+). The protein operates within cofactor biosynthesis; (R)-pantothenate biosynthesis; (R)-pantothenate from (R)-pantoate and beta-alanine: step 1/1. Its function is as follows. Catalyzes the condensation of pantoate with beta-alanine in an ATP-dependent reaction via a pantoyl-adenylate intermediate. The protein is Pantothenate synthetase of Vibrio cholerae serotype O1 (strain ATCC 39541 / Classical Ogawa 395 / O395).